Here is a 189-residue protein sequence, read N- to C-terminus: Putative ankyrin repeat protein TV1425 (189 aa).

ANK repeat units follow at residues 31–60 (YNRT…KLED), 64–93 (EGST…NVNT), 97–126 (SGKT…NVND), and 130–159 (EGET…DISA).

The protein is Putative ankyrin repeat protein TV1425 of Thermoplasma volcanium (strain ATCC 51530 / DSM 4299 / JCM 9571 / NBRC 15438 / GSS1).